Consider the following 303-residue polypeptide: Aspartate carbamoyltransferase catalytic subunit (303 aa).

Positions 54 and 55 each coordinate carbamoyl phosphate. K82 contributes to the L-aspartate binding site. Residues R104, H132, and Q135 each coordinate carbamoyl phosphate. Residues R165 and R221 each contribute to the L-aspartate site. Carbamoyl phosphate-binding residues include G261 and P262.

This sequence belongs to the aspartate/ornithine carbamoyltransferase superfamily. ATCase family. Heterododecamer (2C3:3R2) of six catalytic PyrB chains organized as two trimers (C3), and six regulatory PyrI chains organized as three dimers (R2).

The catalysed reaction is carbamoyl phosphate + L-aspartate = N-carbamoyl-L-aspartate + phosphate + H(+). It participates in pyrimidine metabolism; UMP biosynthesis via de novo pathway; (S)-dihydroorotate from bicarbonate: step 2/3. Its function is as follows. Catalyzes the condensation of carbamoyl phosphate and aspartate to form carbamoyl aspartate and inorganic phosphate, the committed step in the de novo pyrimidine nucleotide biosynthesis pathway. The sequence is that of Aspartate carbamoyltransferase catalytic subunit from Koribacter versatilis (strain Ellin345).